The sequence spans 1446 residues: ABC-type transporter oblD (1446 aa).

N-linked (GlcNAc...) asparagine glycosylation is found at Asn9, Asn28, Asn222, Asn281, and Asn305. The ABC transporter 1 domain maps to 104 to 357 (LEVLSLVSKA…FLDMGFVCPD (254 aa)). The next 6 helical transmembrane spans lie at 468–488 (VTIS…SIFY), 502–522 (ALLF…MLTL), 548–568 (MIMD…VLYF), 577–597 (GAFF…SMFF), 610–630 (ALPF…FTIP), and 719–739 (IGVI…ATDF). Residues 796–1038 (FQWKDVCFDI…ILIDYFVRNG (243 aa)) form the ABC transporter 2 domain. Residue 832-839 (GVSGAGKT) coordinates ATP. 5 helical membrane passes run 1147 to 1167 (ALCV…PNTI), 1177 to 1197 (IFML…HFVA), 1217 to 1237 (FIIS…VLMF), 1265 to 1285 (LMVW…IAAF), and 1301 to 1321 (LCLI…FWIF). N-linked (GlcNAc...) asparagine glycosylation is found at Asn1344 and Asn1359. Residues 1412 to 1432 (FGLMWVFIVFNIFAACLLYWW) traverse the membrane as a helical segment.

It belongs to the ABC transporter superfamily. ABCG family. PDR (TC 3.A.1.205) subfamily.

Its subcellular location is the cell membrane. ABC-type transporter; part of the gene cluster that mediates the biosynthesis of the sesterterpenes ophiobolins, fungal phytotoxins with potential anti-cancer activities. Acts as a specific transporter involved in ophiobolins secretion. The protein is ABC-type transporter oblD of Aspergillus clavatus (strain ATCC 1007 / CBS 513.65 / DSM 816 / NCTC 3887 / NRRL 1 / QM 1276 / 107).